Here is a 209-residue protein sequence, read N- to C-terminus: MTQKEQGQGFIEVVCGPMFAGKTEALIQRSNQALQLNKKILSFKPQIDDRYSVKEEIVSHNQNTIPAILIDKSKDILPFITPEINVVIIDEAQFLDNDIVAIVDYLANCNIEVIISGLELDFCGKPFGPMPYLLAIADTVTKLTSICAISGKKANRTQRLIDGKPAQSNEPVVLVGGKEYHEPRCRKHHCLADIDKTKINWQNFTNQSK.

ATP-binding positions include 16 to 23 (GPMFAGKT) and 90 to 93 (DEAQ). The active-site Proton acceptor is the Glu91.

This sequence belongs to the thymidine kinase family. Homotetramer.

It is found in the cytoplasm. The enzyme catalyses thymidine + ATP = dTMP + ADP + H(+). The chain is Thymidine kinase from Onion yellows phytoplasma (strain OY-M).